The primary structure comprises 378 residues: Chaperone protein DnaJ (378 aa).

The 68-residue stretch at 5 to 72 (DFYEVLGVPK…QKRAAYDQFG (68 aa)) folds into the J domain. The segment at 138–216 (GKEAQIRIPS…CHGQGKVKKQ (79 aa)) adopts a CR-type zinc-finger fold. Residues cysteine 151, cysteine 154, cysteine 168, cysteine 171, cysteine 190, cysteine 193, cysteine 204, and cysteine 207 each contribute to the Zn(2+) site. CXXCXGXG motif repeat units follow at residues 151-158 (CETCHGSG), 168-175 (CTTCSGTG), 190-197 (CPHCRGTG), and 204-211 (CVTCHGQG). Residues 354 to 378 (SLKKGGGKHSPSGESWTDRLKNLFT) are disordered. The segment covering 369-378 (WTDRLKNLFT) has biased composition (basic and acidic residues).

It belongs to the DnaJ family. Homodimer. Zn(2+) is required as a cofactor.

The protein resides in the cytoplasm. Its function is as follows. Participates actively in the response to hyperosmotic and heat shock by preventing the aggregation of stress-denatured proteins and by disaggregating proteins, also in an autonomous, DnaK-independent fashion. Unfolded proteins bind initially to DnaJ; upon interaction with the DnaJ-bound protein, DnaK hydrolyzes its bound ATP, resulting in the formation of a stable complex. GrpE releases ADP from DnaK; ATP binding to DnaK triggers the release of the substrate protein, thus completing the reaction cycle. Several rounds of ATP-dependent interactions between DnaJ, DnaK and GrpE are required for fully efficient folding. Also involved, together with DnaK and GrpE, in the DNA replication of plasmids through activation of initiation proteins. The sequence is that of Chaperone protein DnaJ from Paracidovorax citrulli (strain AAC00-1) (Acidovorax citrulli).